We begin with the raw amino-acid sequence, 105 residues long: Iron-sulfur cluster assembly protein CyaY (105 aa).

This sequence belongs to the frataxin family.

Its function is as follows. Involved in iron-sulfur (Fe-S) cluster assembly. May act as a regulator of Fe-S biogenesis. This is Iron-sulfur cluster assembly protein CyaY from Paraburkholderia xenovorans (strain LB400).